The sequence spans 162 residues: Putative pre-16S rRNA nuclease (162 aa).

The protein belongs to the YqgF nuclease family.

The protein localises to the cytoplasm. Its function is as follows. Could be a nuclease involved in processing of the 5'-end of pre-16S rRNA. In Brucella abortus (strain S19), this protein is Putative pre-16S rRNA nuclease.